Here is a 327-residue protein sequence, read N- to C-terminus: Phenylalanine--tRNA ligase alpha subunit (327 aa).

E252 is a Mg(2+) binding site.

This sequence belongs to the class-II aminoacyl-tRNA synthetase family. Phe-tRNA synthetase alpha subunit type 1 subfamily. Tetramer of two alpha and two beta subunits. The cofactor is Mg(2+).

Its subcellular location is the cytoplasm. It catalyses the reaction tRNA(Phe) + L-phenylalanine + ATP = L-phenylalanyl-tRNA(Phe) + AMP + diphosphate + H(+). This Shigella flexneri protein is Phenylalanine--tRNA ligase alpha subunit.